Reading from the N-terminus, the 1257-residue chain is Insulin receptor substrate 4 (1257 aa).

The 122-residue stretch at 78-199 (EVCKRGYLRK…WYLLLSRLIL (122 aa)) folds into the PH domain. An IRS-type PTB domain is found at 231–335 (YKDVWQVIVK…EKMRALCADE (105 aa)). 3 disordered regions span residues 406 to 653 (VAHS…GGRF), 678 to 921 (IPEG…SSDY), and 1179 to 1257 (QDVA…KRGR). Over residues 408–424 (HSRRGRLHLPRGRRSRR) the composition is skewed to basic residues. The YXXM motif 1 motif lies at 487–490 (YMPM). Positions 495–509 (SGNGRGSGGGQGSNG) are enriched in gly residues. The span at 510 to 524 (QGSSSHSSGGNQCSG) shows a compositional bias: low complexity. Gly residues-rich tracts occupy residues 525–542 (EGQGSRGGQGSNGQGSGG) and 551–599 (GTAG…SGKG). Pro residues predominate over residues 627 to 640 (MPPPPPPPPPPPPA). Over residues 641 to 650 (GGTGGKGKSG) the composition is skewed to gly residues. The interval 678–800 (IPEGAARGPH…KNPRNPQGGS (123 aa)) is CRK-binding. Short sequence motifs (YXXM motif) lie at residues 700–703 (YVPM), 717–720 (YMPM), and 743–746 (YMMM). The segment covering 750-761 (VSPPPAPSPPKA) has biased composition (pro residues). Residues 763–774 (DTNKEDDSKDND) show a composition bias toward basic and acidic residues. A YXXM motif 5 motif is present at residues 779-782 (YMFM). The span at 800–810 (SSSKSWSSYFS) shows a compositional bias: low complexity. Residues 815–826 (FRSSPLGQNDNS) show a composition bias toward polar residues. A YXXM motif 6 motif is present at residues 828 to 831 (YVPM). Basic and acidic residues predominate over residues 840-855 (GLDKEVSYNWDPKDAA). Residues 895–897 (ITK) form a GRB2-binding region. A Phosphotyrosine modification is found at tyrosine 921. Positions 921–924 (YVNM) match the YXXM motif 7 motif. Positions 1236–1257 (DTHVRMDFARRDNQFDSPKRGR) are enriched in basic and acidic residues.

Interacts with SOCS6 in response to stimulation with either insulin or IGF1. Interacts with CRK and CRKL. Interaction with CRK is stronger than with CRKL. Interacts with CRK via the phosphorylated YXXM motifs. Interacts with GRB2 and PIK3R1. Interacts with PLC-gamma, SHC1, PTK6, PPP4C and NISCH. Interacts with ASB4; this interaction promotes IRS4 proteasomal degradation. Post-translationally, phosphorylated on tyrosine residues in response to both insulin and IGF1 signaling. Phosphorylated on Tyr-921 in response to FGF2 signaling. Phosphorylation of Tyr-921 is required for GRB2, phospholipase C-gamma and phosphatidylinositol 3-kinase interaction. In terms of processing, ubiquitinated in a ASB4-dependent manner, leading to proteasomal degradation. As to expression, expressed in myoblasts. Expressed in liver and hepatocellular carcinoma.

Its subcellular location is the cell membrane. Its function is as follows. Acts as an interface between multiple growth factor receptors possessing tyrosine kinase activity, such as insulin receptor, IGF1R and FGFR1, and a complex network of intracellular signaling molecules containing SH2 domains. Involved in the IGF1R mitogenic signaling pathway. Promotes the AKT1 signaling pathway and BAD phosphorylation during insulin stimulation without activation of RPS6KB1 or the inhibition of apoptosis. Interaction with GRB2 enhances insulin-stimulated mitogen-activated protein kinase activity. May be involved in nonreceptor tyrosine kinase signaling in myoblasts. Plays a pivotal role in the proliferation/differentiation of hepatoblastoma cell through EPHB2 activation upon IGF1 stimulation. May play a role in the signal transduction in response to insulin and to a lesser extent in response to IL4 and GH on mitogenesis. Plays a role in growth, reproduction and glucose homeostasis. May act as negative regulators of the IGF1 signaling pathway by suppressing the function of IRS1 and IRS2. The sequence is that of Insulin receptor substrate 4 (IRS4) from Homo sapiens (Human).